The sequence spans 162 residues: NADH-quinone oxidoreductase subunit I 1 (162 aa).

4Fe-4S ferredoxin-type domains lie at 44–74 and 90–119; these read LRTY…VQAA and YKYQ…LTQE. Residues cysteine 54, cysteine 57, cysteine 60, cysteine 64, cysteine 99, cysteine 102, cysteine 105, and cysteine 109 each contribute to the [4Fe-4S] cluster site.

Belongs to the complex I 23 kDa subunit family. As to quaternary structure, NDH-1 is composed of 14 different subunits. Subunits NuoA, H, J, K, L, M, N constitute the membrane sector of the complex. It depends on [4Fe-4S] cluster as a cofactor.

The protein resides in the cell membrane. The catalysed reaction is a quinone + NADH + 5 H(+)(in) = a quinol + NAD(+) + 4 H(+)(out). In terms of biological role, NDH-1 shuttles electrons from NADH, via FMN and iron-sulfur (Fe-S) centers, to quinones in the respiratory chain. The immediate electron acceptor for the enzyme in this species is believed to be ubiquinone. Couples the redox reaction to proton translocation (for every two electrons transferred, four hydrogen ions are translocated across the cytoplasmic membrane), and thus conserves the redox energy in a proton gradient. The sequence is that of NADH-quinone oxidoreductase subunit I 1 from Symbiobacterium thermophilum (strain DSM 24528 / JCM 14929 / IAM 14863 / T).